A 330-amino-acid polypeptide reads, in one-letter code: MKIAVDAMGGDNAPKAVIEGVMKAVEDFEDLEITLIGDREKIAAHLTEHGRITVKHAEEVIEATDEPVRAVRRKKNSSMVLMAGEVAEGRADACISAGNTGALMTAGLFIVGRIEGIERPALAPTLPTVSGDGFLLLDVGANVDAKPEHLVQYAIMGSVYGEQVLGVKNPRIGLLNVGTEDKKGNELAKQTFQKLKETDLNFIGNVEARDMLDGVADVIVTDGFTGNVALKTVEGAALSIFKMLRTTLTSSFTAKLAASALKPKLKEMKTKMDYSEYGGAGLFGLKAPVIKAHGSSDGRAVYHAIRQAREMVSQNVAAFIEEKIQQKADE.

Belongs to the PlsX family. As to quaternary structure, homodimer. Probably interacts with PlsY.

The protein resides in the cytoplasm. The enzyme catalyses a fatty acyl-[ACP] + phosphate = an acyl phosphate + holo-[ACP]. It participates in lipid metabolism; phospholipid metabolism. Functionally, catalyzes the reversible formation of acyl-phosphate (acyl-PO(4)) from acyl-[acyl-carrier-protein] (acyl-ACP). This enzyme utilizes acyl-ACP as fatty acyl donor, but not acyl-CoA. This chain is Phosphate acyltransferase, found in Bacillus licheniformis (strain ATCC 14580 / DSM 13 / JCM 2505 / CCUG 7422 / NBRC 12200 / NCIMB 9375 / NCTC 10341 / NRRL NRS-1264 / Gibson 46).